The following is a 357-amino-acid chain: tRNA N6-adenosine threonylcarbamoyltransferase (357 aa).

Residues histidine 120 and histidine 124 each contribute to the Fe cation site. Substrate contacts are provided by residues 143 to 147, aspartate 176, glycine 189, and asparagine 289; that span reads LVSGG. Aspartate 317 is a Fe cation binding site.

This sequence belongs to the KAE1 / TsaD family. Fe(2+) is required as a cofactor.

The protein localises to the cytoplasm. The enzyme catalyses L-threonylcarbamoyladenylate + adenosine(37) in tRNA = N(6)-L-threonylcarbamoyladenosine(37) in tRNA + AMP + H(+). Required for the formation of a threonylcarbamoyl group on adenosine at position 37 (t(6)A37) in tRNAs that read codons beginning with adenine. Is involved in the transfer of the threonylcarbamoyl moiety of threonylcarbamoyl-AMP (TC-AMP) to the N6 group of A37, together with TsaE and TsaB. TsaD likely plays a direct catalytic role in this reaction. In Polynucleobacter necessarius subsp. necessarius (strain STIR1), this protein is tRNA N6-adenosine threonylcarbamoyltransferase.